Consider the following 291-residue polypeptide: Protease HtpX (291 aa).

The next 2 membrane-spanning stretches (helical) occupy residues 4-24 and 37-57; these read IVIFLLTNLAVMVVFGILLTC and IISGLFGFCGAFISLLMSKFI. His139 contributes to the Zn(2+) binding site. Residue Glu140 is part of the active site. His143 lines the Zn(2+) pocket. 2 consecutive transmembrane segments (helical) span residues 147-167 and 195-215; these read GDMVTITLISGIVNTFVIFIS and IVSTILELAFGILASIIVLWF. Zn(2+) is bound at residue Glu220.

The protein belongs to the peptidase M48B family. The cofactor is Zn(2+).

It is found in the cell membrane. The sequence is that of Protease HtpX from Baumannia cicadellinicola subsp. Homalodisca coagulata.